Here is a 783-residue protein sequence, read N- to C-terminus: Tricorn protease-interacting factor F2 (783 aa).

Substrate contacts are provided by residues Glu-107 and 236 to 240 (GAMEN). Residue His-271 coordinates Zn(2+). Glu-272 (proton acceptor) is an active-site residue. The Zn(2+) site is built by His-275 and Glu-294.

This sequence belongs to the peptidase M1 family. In terms of assembly, monomer. Part of the Tricorn proteolytic complex. Zn(2+) serves as cofactor.

Its subcellular location is the cytoplasm. Functionally, proteases F1, F2 and F3 degrade oligopeptides produced by Tricorn (themselves probably produced by the proteasome), yielding free amino acids. This chain is Tricorn protease-interacting factor F2 (trf2), found in Thermoplasma acidophilum (strain ATCC 25905 / DSM 1728 / JCM 9062 / NBRC 15155 / AMRC-C165).